Reading from the N-terminus, the 210-residue chain is MAVVLEAKERPDKKHSTLRRIRLQGNIPGILYGKNIDNQMIFVSGAALEKTIREGGRHSLMTLKIGEKDYSVLLREIQRDPLRGNILHADFQAVDMSTEVDIDVDVRLIGEAAGEKDGGVLQQNLHQLTIRVLPANIPPSIDIDISHLQIGDTVTVGDINTGGKYEIIDDPSEVIATILPPQQEEEIHSGEQQEPGHPDAEEGRETTPES.

The disordered stretch occupies residues L179–S210. Over residues E185–S210 the composition is skewed to basic and acidic residues.

The protein belongs to the bacterial ribosomal protein bL25 family. CTC subfamily. Part of the 50S ribosomal subunit; part of the 5S rRNA/L5/L18/L25 subcomplex. Contacts the 5S rRNA. Binds to the 5S rRNA independently of L5 and L18.

This is one of the proteins that binds to the 5S RNA in the ribosome where it forms part of the central protuberance. This is Large ribosomal subunit protein bL25 from Geobacillus sp. (strain WCH70).